Consider the following 304-residue polypeptide: D-alanine--D-alanine ligase (304 aa).

The region spanning 99-293 is the ATP-grasp domain; it reads KKILRYEGIE…YSKLLDMIIE (195 aa). Position 126-181 (126-181) interacts with ATP; that stretch reads LDKLGFPLVVKPNSGGSSVGVKIVYDKDELISMLETVFEWDSEVVIEKYIKGEEIT. Mg(2+) is bound by residues Asp248, Glu260, and Asn262.

Belongs to the D-alanine--D-alanine ligase family. Mg(2+) serves as cofactor. Requires Mn(2+) as cofactor.

It is found in the cytoplasm. The catalysed reaction is 2 D-alanine + ATP = D-alanyl-D-alanine + ADP + phosphate + H(+). The protein operates within cell wall biogenesis; peptidoglycan biosynthesis. Functionally, cell wall formation. The polypeptide is D-alanine--D-alanine ligase (Bacillus anthracis (strain A0248)).